We begin with the raw amino-acid sequence, 341 residues long: Heat-inducible transcription repressor HrcA (341 aa).

Belongs to the HrcA family.

Negative regulator of class I heat shock genes (grpE-dnaK-dnaJ and groELS operons). Prevents heat-shock induction of these operons. The chain is Heat-inducible transcription repressor HrcA from Carboxydothermus hydrogenoformans (strain ATCC BAA-161 / DSM 6008 / Z-2901).